A 206-amino-acid polypeptide reads, in one-letter code: MSSDRRTARDCSAVFFGEFHDVHVGRAARSRRVHSQPHPHGAGLAAARRDVSRHHAALQSAKALRVLVDLFVERYVDAKLDYIAGLDARGFIIAPIVAYELSVGFVPIRKVGKLPYATQRESYALEYGTATVEIHEDACKPGDRVVIVDDLIATGGTMMAGKNLLERLGAVVVEGAAIVDLPDLGGSALLREAGLPLYTVTEFPGH.

It belongs to the purine/pyrimidine phosphoribosyltransferase family. In terms of assembly, homodimer.

The protein resides in the cytoplasm. It carries out the reaction AMP + diphosphate = 5-phospho-alpha-D-ribose 1-diphosphate + adenine. It functions in the pathway purine metabolism; AMP biosynthesis via salvage pathway; AMP from adenine: step 1/1. Functionally, catalyzes a salvage reaction resulting in the formation of AMP, that is energically less costly than de novo synthesis. The polypeptide is Adenine phosphoribosyltransferase (Burkholderia mallei (strain NCTC 10229)).